The primary structure comprises 186 residues: Peptidyl-tRNA hydrolase (186 aa).

Residue His19 is the Proton acceptor of the active site. TRNA-binding residues include Phe64, Asn66, and Asn112.

The protein belongs to the PTH family. In terms of assembly, monomer.

It is found in the cytoplasm. It catalyses the reaction an N-acyl-L-alpha-aminoacyl-tRNA + H2O = an N-acyl-L-amino acid + a tRNA + H(+). Hydrolyzes ribosome-free peptidyl-tRNAs (with 1 or more amino acids incorporated), which drop off the ribosome during protein synthesis, or as a result of ribosome stalling. In terms of biological role, catalyzes the release of premature peptidyl moieties from peptidyl-tRNA molecules trapped in stalled 50S ribosomal subunits, and thus maintains levels of free tRNAs and 50S ribosomes. The protein is Peptidyl-tRNA hydrolase of Pelagibacter ubique (strain HTCC1062).